Consider the following 457-residue polypeptide: Cation efflux system protein CusC (457 aa).

Positions 1–17 (MSPCKLLPFCVALALTG) are cleaved as a signal peptide. Cys-18 is lipidated: N-palmitoyl cysteine. Cys-18 carries the S-diacylglycerol cysteine lipid modification.

The protein belongs to the outer membrane factor (OMF) (TC 1.B.17) family. Homotrimer. Component of the cus efflux system composed of CusA, CusB, CusC and CusF.

The protein localises to the cell outer membrane. Forms pores that allow passive diffusion of cations across the outer membrane. Part of a cation efflux system that mediates resistance to copper and silver. In pathogenic strains it allows the bacteria to invade brain microvascular endothelial cells (BMEC) thus allowing it to cross the blood-brain barrier and cause neonatal meningitis. This Escherichia coli (strain K12) protein is Cation efflux system protein CusC (cusC).